The sequence spans 357 residues: Putative lipopolysaccharide heptosyltransferase 4 (357 aa).

The catalysed reaction is alpha-D-Glc-(1-&gt;2)-alpha-D-Glc-(1-&gt;3)-[alpha-D-Gal-(1-&gt;6)]-alpha-D-Glc-(1-&gt;3)-[L-alpha-D-Hep-(1-&gt;7)]-4-O-PO3(2-)-L-alpha-D-Hep-(1-&gt;3)-4-O-PO3(2-)-L-alpha-D-Hep-(1-&gt;5)-[alpha-Kdo-(2-&gt;4)]-alpha-Kdo-(2-&gt;6)-lipid A + ADP-L-glycero-beta-D-manno-heptose = lipid A-core + ADP + H(+). Its pathway is bacterial outer membrane biogenesis; LPS core biosynthesis. In terms of biological role, transferase involved in the biosynthesis of the core oligosaccharide region of lipopolysaccharide (LPS). May catalyze the addition of the terminal heptose (heptose IV) to the outer-core glucose III, the last step of the lipid A-core oligosaccharide biosynthesis. In Escherichia coli (strain K12), this protein is Putative lipopolysaccharide heptosyltransferase 4.